The sequence spans 461 residues: Cysteine--tRNA ligase (461 aa).

Cys-30 provides a ligand contact to Zn(2+). Residues 32–42 (VTVYDLCHIGH) carry the 'HIGH' region motif. Zn(2+)-binding residues include Cys-211, His-236, and Glu-240. Residues 268–272 (KMSKS) carry the 'KMSKS' region motif. Lys-271 contacts ATP.

This sequence belongs to the class-I aminoacyl-tRNA synthetase family. In terms of assembly, monomer. Zn(2+) serves as cofactor.

It localises to the cytoplasm. The catalysed reaction is tRNA(Cys) + L-cysteine + ATP = L-cysteinyl-tRNA(Cys) + AMP + diphosphate. The sequence is that of Cysteine--tRNA ligase from Shewanella sp. (strain ANA-3).